The chain runs to 247 residues: Probable transcriptional regulatory protein EUBELI_00902 (247 aa).

The protein belongs to the TACO1 family.

The protein resides in the cytoplasm. The protein is Probable transcriptional regulatory protein EUBELI_00902 of Lachnospira eligens (strain ATCC 27750 / DSM 3376 / VPI C15-48 / C15-B4) (Eubacterium eligens).